The sequence spans 556 residues: Chaperone protein HscC (556 aa).

Belongs to the heat shock protein 70 family.

Probable chaperone. Has ATPase activity. Not stimulated by DnaJ. The sequence is that of Chaperone protein HscC (hscC) from Escherichia coli (strain K12).